Here is a 119-residue protein sequence, read N- to C-terminus: Basic phospholipase A2 (119 aa).

7 disulfides stabilise this stretch: Cys-11–Cys-72, Cys-27–Cys-118, Cys-29–Cys-45, Cys-44–Cys-100, Cys-51–Cys-93, Cys-61–Cys-86, and Cys-79–Cys-91. Tyr-28, Gly-30, and Gly-32 together coordinate Ca(2+). The active site involves His-48. Asp-49 contacts Ca(2+). A glycan (N-linked (GlcNAc...) asparagine) is linked at Asn-82. Asp-94 is a catalytic residue.

This sequence belongs to the phospholipase A2 family. Group I subfamily. D49 sub-subfamily. Ca(2+) serves as cofactor. Expressed by the venom gland.

It localises to the secreted. The catalysed reaction is a 1,2-diacyl-sn-glycero-3-phosphocholine + H2O = a 1-acyl-sn-glycero-3-phosphocholine + a fatty acid + H(+). Its function is as follows. Snake venom phospholipase A2 (PLA2) that shows weak myotoxicity and induces edema in mice. Shows no cytotoxicity in vitro. Has an anticoagulant effect in vitro. PLA2 catalyzes the calcium-dependent hydrolysis of the 2-acyl groups in 3-sn-phosphoglycerides. The sequence is that of Basic phospholipase A2 from Micrurus mipartitus (Red-tailed coral snake).